Here is a 385-residue protein sequence, read N- to C-terminus: SWI/SNF-related matrix-associated actin-dependent regulator of chromatin subfamily B member 1 (385 aa).

The segment at 1–113 (MMMMALSKTF…DEKYKAVSIS (113 aa)) is DNA-binding. Residues lysine 106, lysine 108, and lysine 124 each participate in a glycyl lysine isopeptide (Lys-Gly) (interchain with G-Cter in SUMO2) cross-link. At serine 129 the chain carries Phosphoserine. A Glycyl lysine isopeptide (Lys-Gly) (interchain with G-Cter in SUMO2) cross-link involves residue lysine 161. The tract at residues 183-243 (PEVLVPIRLD…VPAIASAIRQ (61 aa)) is HIV-1 integrase-binding. 2 tandem repeats follow at residues 186–245 (LVPI…RQQI) and 259–319 (DQRV…RGQL). An MYC-binding region spans residues 186–245 (LVPIRLDMEIDGQKLRDAFTWNMNEKLMTPEMFSEILCDDLDLNPLTFVPAIASAIRQQI). The segment at 186-319 (LVPIRLDMEI…TIAYSIRGQL (134 aa)) is 2 X approximate tandem repeats. The interval 304 to 318 (GGEFVTTIAYSIRGQ) is interaction with PPP1R15A.

It belongs to the SNF5 family. Component of the multiprotein chromatin-remodeling complexes SWI/SNF: SWI/SNF-A (BAF), SWI/SNF-B (PBAF) and related complexes. The canonical complex contains a catalytic subunit (either SMARCA4/BRG1/BAF190A or SMARCA2/BRM/BAF190B) and at least SMARCE1, ACTL6A/BAF53, SMARCC1/BAF155, SMARCC2/BAF170, and SMARCB1/SNF5/BAF47. Other subunits specific to each of the complexes may also be present permitting several possible combinations developmentally and tissue specific. Component of the BAF complex, which includes at least actin (ACTB), ARID1A/BAF250A, ARID1B/BAF250B, SMARCA2/BRM, SMARCA4/BRG1/BAF190A, ACTL6A/BAF53, ACTL6B/BAF53B, SMARCE1/BAF57 SMARCC1/BAF155, SMARCC2/BAF170, SMARCB1/SNF5/INI1, and one or more SMARCD1/BAF60A, SMARCD2/BAF60B, or SMARCD3/BAF60C. In muscle cells, the BAF complex also contains DPF3. Component of neural progenitors-specific chromatin remodeling complex (npBAF complex) composed of at least, ARID1A/BAF250A or ARID1B/BAF250B, SMARCD1/BAF60A, SMARCD3/BAF60C, SMARCA2/BRM/BAF190B, SMARCA4/BRG1/BAF190A, SMARCB1/BAF47, SMARCC1/BAF155, SMARCE1/BAF57, SMARCC2/BAF170, PHF10/BAF45A, ACTL6A/BAF53A and actin. Component of neuron-specific chromatin remodeling complex (nBAF complex) composed of at least, ARID1A/BAF250A or ARID1B/BAF250B, SMARCD1/BAF60A, SMARCD3/BAF60C, SMARCA2/BRM/BAF190B, SMARCA4/BRG1/BAF190A, SMARCB1/BAF47, SMARCC1/BAF155, SMARCE1/BAF57, SMARCC2/BAF170, DPF1/BAF45B, DPF3/BAF45C, ACTL6B/BAF53B and actin. Component of the SWI/SNF-B (PBAF) chromatin remodeling complex, at least composed of SMARCA4/BRG1, SMARCB1/BAF47/SNF5, ACTL6A/BAF53A or ACTL6B/BAF53B, SMARCE1/BAF57, SMARCD1/BAF60A, SMARCD2/BAF60B, perhaps SMARCD3/BAF60C, SMARCC1/BAF155, SMARCC2/BAF170, PBRM1/BAF180, ARID2/BAF200 and actin. Binds to double-stranded DNA. Interacts with CEBPB (when not methylated). Interacts with PIH1D1. Interacts with MYK and MAEL. Interacts with PPP1R15A. Interacts with DPF2. Interacts with YWHAZ. Interacts with ERCC6. Interacts with FOS, FOSB isoform 1 and 2, FOSL1 and FOSL2. As to quaternary structure, (Microbial infection) Binds tightly to the human immunodeficiency virus-type 1 (HIV-1) integrase in vitro and stimulates its DNA-joining activity. Interacts with human papillomavirus 18 E1 protein to stimulate its viral replication. Interacts with Epstein-Barr virus protein EBNA-2.

It localises to the nucleus. Its function is as follows. Core component of the BAF (hSWI/SNF) complex. This ATP-dependent chromatin-remodeling complex plays important roles in cell proliferation and differentiation, in cellular antiviral activities and inhibition of tumor formation. The BAF complex is able to create a stable, altered form of chromatin that constrains fewer negative supercoils than normal. This change in supercoiling would be due to the conversion of up to one-half of the nucleosomes on polynucleosomal arrays into asymmetric structures, termed altosomes, each composed of 2 histones octamers. Stimulates in vitro the remodeling activity of SMARCA4/BRG1/BAF190A. Involved in activation of CSF1 promoter. Belongs to the neural progenitors-specific chromatin remodeling complex (npBAF complex) and the neuron-specific chromatin remodeling complex (nBAF complex). During neural development a switch from a stem/progenitor to a postmitotic chromatin remodeling mechanism occurs as neurons exit the cell cycle and become committed to their adult state. The transition from proliferating neural stem/progenitor cells to postmitotic neurons requires a switch in subunit composition of the npBAF and nBAF complexes. As neural progenitors exit mitosis and differentiate into neurons, npBAF complexes which contain ACTL6A/BAF53A and PHF10/BAF45A, are exchanged for homologous alternative ACTL6B/BAF53B and DPF1/BAF45B or DPF3/BAF45C subunits in neuron-specific complexes (nBAF). The npBAF complex is essential for the self-renewal/proliferative capacity of the multipotent neural stem cells. The nBAF complex along with CREST plays a role regulating the activity of genes essential for dendrite growth. Plays a key role in cell-cycle control and causes cell cycle arrest in G0/G1. The sequence is that of SWI/SNF-related matrix-associated actin-dependent regulator of chromatin subfamily B member 1 (SMARCB1) from Homo sapiens (Human).